We begin with the raw amino-acid sequence, 343 residues long: Anthranilate phosphoribosyltransferase (343 aa).

5-phospho-alpha-D-ribose 1-diphosphate-binding positions include Gly84, 87-88 (GD), Thr92, 94-97 (NIST), 112-120 (KHGNRGVSS), and Ser124. Gly84 is a binding site for anthranilate. Position 96 (Ser96) interacts with Mg(2+). Residue Asn115 participates in anthranilate binding. Anthranilate is bound at residue Arg170. 2 residues coordinate Mg(2+): Asp229 and Glu230.

The protein belongs to the anthranilate phosphoribosyltransferase family. Homodimer. Requires Mg(2+) as cofactor.

The catalysed reaction is N-(5-phospho-beta-D-ribosyl)anthranilate + diphosphate = 5-phospho-alpha-D-ribose 1-diphosphate + anthranilate. It participates in amino-acid biosynthesis; L-tryptophan biosynthesis; L-tryptophan from chorismate: step 2/5. Catalyzes the transfer of the phosphoribosyl group of 5-phosphorylribose-1-pyrophosphate (PRPP) to anthranilate to yield N-(5'-phosphoribosyl)-anthranilate (PRA). The chain is Anthranilate phosphoribosyltransferase from Burkholderia ambifaria (strain MC40-6).